We begin with the raw amino-acid sequence, 326 residues long: Probable cell division protein WhiA (326 aa).

A DNA-binding region (H-T-H motif) is located at residues 275-308 (SLDELGRLADPPMTKDAIAGRIRRLLAMADKRAL).

It belongs to the WhiA family.

Involved in cell division and chromosome segregation. This chain is Probable cell division protein WhiA, found in Arthrobacter sp. (strain FB24).